The primary structure comprises 566 residues: Oxygen-dependent choline dehydrogenase (566 aa).

7 to 36 is a binding site for FAD; sequence DYIICGAGSAGNVLATRLTEDPNVTVLLLE. The segment at 183–203 is disordered; sequence QQEGFGPMDRTVTPKGRRAST. Histidine 474 acts as the Proton acceptor in catalysis.

Belongs to the GMC oxidoreductase family. Requires FAD as cofactor.

The catalysed reaction is choline + A = betaine aldehyde + AH2. It catalyses the reaction betaine aldehyde + NAD(+) + H2O = glycine betaine + NADH + 2 H(+). It participates in amine and polyamine biosynthesis; betaine biosynthesis via choline pathway; betaine aldehyde from choline (cytochrome c reductase route): step 1/1. In terms of biological role, involved in the biosynthesis of the osmoprotectant glycine betaine. Catalyzes the oxidation of choline to betaine aldehyde and betaine aldehyde to glycine betaine at the same rate. This is Oxygen-dependent choline dehydrogenase from Burkholderia ambifaria (strain ATCC BAA-244 / DSM 16087 / CCUG 44356 / LMG 19182 / AMMD) (Burkholderia cepacia (strain AMMD)).